The chain runs to 50 residues: Small ribosomal subunit protein uS14 (50 aa).

Residues Cys15, Cys18, Cys33, and Cys36 each coordinate Zn(2+).

Belongs to the universal ribosomal protein uS14 family. Zinc-binding uS14 subfamily. In terms of assembly, part of the 30S ribosomal subunit. Zn(2+) is required as a cofactor.

Binds 16S rRNA, required for the assembly of 30S particles. In Methanothermobacter thermautotrophicus (strain ATCC 29096 / DSM 1053 / JCM 10044 / NBRC 100330 / Delta H) (Methanobacterium thermoautotrophicum), this protein is Small ribosomal subunit protein uS14.